Consider the following 398-residue polypeptide: Serine/threonine-protein phosphatase 2A activator (398 aa).

3 residues coordinate ATP: Arg-137, Thr-142, and Gly-143. Residues Gly-197 and Asp-203 each coordinate Mg(2+). ATP is bound by residues Pro-293, Gln-296, and His-297. The span at 343–352 shows a compositional bias: pro residues; sequence PVATAPPPPA. The disordered stretch occupies residues 343–398; it reads PVATAPPPPAESLSIEQNVGDSSSESSDNSVVLRPSTSSSSLVAAAEGSGDKPSKE. The segment covering 363 to 388 has biased composition (low complexity); it reads DSSSESSDNSVVLRPSTSSSSLVAAA.

Belongs to the PTPA-type PPIase family. Associates with PP2A heterodimeric core enzyme PP2A(D), composed of a catalytic subunit (subunit C) and a constant regulatory subunit (PR65 or subunit A). Interacts with the catalytic subunit Pp4-19C of the serine/threonine-protein phosphatase 4 (PP4) complex; thereby mediating basal localization of the Miranda (Mira) complex; probably by facilitating the dephosphorylation of Mira.

It localises to the cytoplasm. It is found in the nucleus. The catalysed reaction is [protein]-peptidylproline (omega=180) = [protein]-peptidylproline (omega=0). Functionally, PPIases accelerate the folding of proteins. It catalyzes the cis-trans isomerization of proline imidic peptide bonds in oligopeptides. Acts as a regulatory subunit for serine/threonine-protein phosphatase 2A (PP2A). Modulates PP2A activity or substrate specificity, probably by inducing a conformational change in the catalytic subunit, a proposed direct target of the PPIase. Acts as mediator for the basal localization of the Miranda (Mira) complex during mitosis of larval neuroblast asymmetric division. Associates with the phosphatase 4 (PP4) complex to mediate basal localization of Mira; probably by facilitating the dephosphorylation of Mira. Cortical association of Mira mediated by the PTPA-PP4 complex seems to be independent of aPKC activity. This chain is Serine/threonine-protein phosphatase 2A activator, found in Drosophila melanogaster (Fruit fly).